Reading from the N-terminus, the 235-residue chain is Probable carboxylesterase Os04g0669600 (235 aa).

Catalysis depends on charge relay system residues S113, D167, and H199.

This sequence belongs to the AB hydrolase superfamily. AB hydrolase 2 family.

Its function is as follows. Possesses carboxylesterase activity in vitro. The polypeptide is Probable carboxylesterase Os04g0669600 (Oryza sativa subsp. japonica (Rice)).